A 225-amino-acid chain; its full sequence is C-reactive protein (225 aa).

A signal peptide spans 1–19; the sequence is MAKLLLYFLLLTSLSDVFG. Residues 24-225 enclose the Pentraxin (PTX) domain; that stretch reads SKKTFVFPKE…EVFIKPQLWP (202 aa). An intrachain disulfide couples Cys-55 to Cys-116. Residues Asn-80, Gln-158, Asp-159, and Gln-169 each coordinate Ca(2+).

It belongs to the pentraxin family. As to quaternary structure, homopentamer. Pentraxin (or pentaxin) have a discoid arrangement of 5 non-covalently bound subunits. Interacts with FCN1; may regulate monocyte activation by FCN1. Ca(2+) is required as a cofactor. As to expression, found in plasma.

The protein localises to the secreted. Functionally, displays several functions associated with host defense: it promotes agglutination, bacterial capsular swelling, phagocytosis and complement fixation through its calcium-dependent binding to phosphorylcholine. Can interact with DNA and histones and may scavenge nuclear material released from damaged circulating cells. The chain is C-reactive protein (CRP) from Cavia porcellus (Guinea pig).